The following is a 183-amino-acid chain: Photosystem I assembly protein Ycf4 (183 aa).

Transmembrane regions (helical) follow at residues 17–39 and 59–81; these read NYLL…FLSY and FIPQ…IYIY.

Belongs to the Ycf4 family.

Its subcellular location is the plastid. The protein resides in the chloroplast thylakoid membrane. In terms of biological role, seems to be required for the assembly of the photosystem I complex. This is Photosystem I assembly protein Ycf4 from Cyanidium caldarium (Red alga).